We begin with the raw amino-acid sequence, 273 residues long: Large ribosomal subunit protein uL2 (273 aa).

Residues 228-273 (VDHPHGGGEGKTSGGRHPVTPWGFPTKGKKTRKNKRTSKFIVKKRK) are disordered. Residues 254 to 273 (KGKKTRKNKRTSKFIVKKRK) are compositionally biased toward basic residues.

It belongs to the universal ribosomal protein uL2 family. As to quaternary structure, part of the 50S ribosomal subunit. Forms a bridge to the 30S subunit in the 70S ribosome.

One of the primary rRNA binding proteins. Required for association of the 30S and 50S subunits to form the 70S ribosome, for tRNA binding and peptide bond formation. It has been suggested to have peptidyltransferase activity; this is somewhat controversial. Makes several contacts with the 16S rRNA in the 70S ribosome. This chain is Large ribosomal subunit protein uL2, found in Rickettsia canadensis (strain McKiel).